Reading from the N-terminus, the 357-residue chain is Peptide chain release factor 1 (357 aa).

At Q233 the chain carries N5-methylglutamine.

The protein belongs to the prokaryotic/mitochondrial release factor family. Post-translationally, methylated by PrmC. Methylation increases the termination efficiency of RF1.

The protein localises to the cytoplasm. Functionally, peptide chain release factor 1 directs the termination of translation in response to the peptide chain termination codons UAG and UAA. The sequence is that of Peptide chain release factor 1 from Enterococcus faecalis (strain ATCC 700802 / V583).